We begin with the raw amino-acid sequence, 171 residues long: Ribosome maturation factor RimP (171 aa).

It belongs to the RimP family.

The protein localises to the cytoplasm. Required for maturation of 30S ribosomal subunits. The protein is Ribosome maturation factor RimP of Oleidesulfovibrio alaskensis (strain ATCC BAA-1058 / DSM 17464 / G20) (Desulfovibrio alaskensis).